A 455-amino-acid polypeptide reads, in one-letter code: Bifunctional protein GlmU (455 aa).

The tract at residues 1 to 226 is pyrophosphorylase; the sequence is MGLSVVILAA…EFEILGVNDR (226 aa). UDP-N-acetyl-alpha-D-glucosamine contacts are provided by residues 8–11, Lys-22, Gln-73, 78–79, 99–101, Gly-136, Glu-151, Asn-166, and Asn-224; these read LAAG, GT, and YGD. Asp-101 is a Mg(2+) binding site. Asn-224 provides a ligand contact to Mg(2+). Residues 227-247 are linker; the sequence is TQLASLERVWQRNVAEKIMAK. The segment at 248 to 455 is N-acetyltransferase; it reads GVSIADPNRF…WQRSVKKTDK (208 aa). The UDP-N-acetyl-alpha-D-glucosamine site is built by Arg-330 and Lys-348. His-360 acts as the Proton acceptor in catalysis. 2 residues coordinate UDP-N-acetyl-alpha-D-glucosamine: Tyr-363 and Asn-374. Acetyl-CoA is bound by residues Ala-377, 383-384, Ser-402, Ala-420, and Arg-437; that span reads NY.

The protein in the N-terminal section; belongs to the N-acetylglucosamine-1-phosphate uridyltransferase family. This sequence in the C-terminal section; belongs to the transferase hexapeptide repeat family. As to quaternary structure, homotrimer. Mg(2+) serves as cofactor.

The protein resides in the cytoplasm. The catalysed reaction is alpha-D-glucosamine 1-phosphate + acetyl-CoA = N-acetyl-alpha-D-glucosamine 1-phosphate + CoA + H(+). The enzyme catalyses N-acetyl-alpha-D-glucosamine 1-phosphate + UTP + H(+) = UDP-N-acetyl-alpha-D-glucosamine + diphosphate. It functions in the pathway nucleotide-sugar biosynthesis; UDP-N-acetyl-alpha-D-glucosamine biosynthesis; N-acetyl-alpha-D-glucosamine 1-phosphate from alpha-D-glucosamine 6-phosphate (route II): step 2/2. The protein operates within nucleotide-sugar biosynthesis; UDP-N-acetyl-alpha-D-glucosamine biosynthesis; UDP-N-acetyl-alpha-D-glucosamine from N-acetyl-alpha-D-glucosamine 1-phosphate: step 1/1. It participates in bacterial outer membrane biogenesis; LPS lipid A biosynthesis. Functionally, catalyzes the last two sequential reactions in the de novo biosynthetic pathway for UDP-N-acetylglucosamine (UDP-GlcNAc). The C-terminal domain catalyzes the transfer of acetyl group from acetyl coenzyme A to glucosamine-1-phosphate (GlcN-1-P) to produce N-acetylglucosamine-1-phosphate (GlcNAc-1-P), which is converted into UDP-GlcNAc by the transfer of uridine 5-monophosphate (from uridine 5-triphosphate), a reaction catalyzed by the N-terminal domain. The protein is Bifunctional protein GlmU of Francisella tularensis subsp. holarctica (strain OSU18).